The sequence spans 246 residues: MRKPVIAGNWKMNMTCTEAIEYMRVLIPLLKDIPKKDREVVIAPPFTALYPLSEFIRDKNDCLSLSSQNVHWEDSGAYTAEVSPLMLNELSVKCAIVGHSEPRKYFSESDEQINKRAKSAQDHQLIPIVCVGETFQQREMGEAERVIRRQIEQGLEGIEVKKLIVAYEPIWAIGTGKTCEANEANRICGLIRKWIGYEDVIIQYGGSVKSNNIDEIMSMSDIDGVLVGGASLDPTNFARIANYEKI.

Residue 9 to 11 participates in substrate binding; it reads NWK. Histidine 99 acts as the Electrophile in catalysis. The Proton acceptor role is filled by glutamate 168. Substrate is bound by residues glycine 174, serine 207, and 228–229; that span reads GG.

This sequence belongs to the triosephosphate isomerase family. As to quaternary structure, homodimer.

Its subcellular location is the cytoplasm. It catalyses the reaction D-glyceraldehyde 3-phosphate = dihydroxyacetone phosphate. It participates in carbohydrate biosynthesis; gluconeogenesis. Its pathway is carbohydrate degradation; glycolysis; D-glyceraldehyde 3-phosphate from glycerone phosphate: step 1/1. In terms of biological role, involved in the gluconeogenesis. Catalyzes stereospecifically the conversion of dihydroxyacetone phosphate (DHAP) to D-glyceraldehyde-3-phosphate (G3P). This is Triosephosphate isomerase from Prochlorococcus marinus (strain NATL1A).